The following is a 281-amino-acid chain: MTAQLIDGNALSRQLRTEVAQRAALLRARGITPGLAVVLVGDNPASQVYVRNKVKACEDNGLHSVLERYPAEMSEADLLARVEALNNDPAIHGILVQLPLPAHIDAQKVIEAISPAKDVDGFHVGSAGALMVGQPGFWPCTPYGCMKMLESIGYDLRGKHAVVIGRSNIVGKPMALMLLQKNATVTICHSATADLKAMTLQADVIVAAVGKRNVLRADMVKPGAVVIDVGMNRNEEGKLCGDVDFDGVKEVAGYITPVPGGVGPMTITMLLVNTLEAAERG.

Residues 165–167 (GRS) and serine 190 each bind NADP(+).

This sequence belongs to the tetrahydrofolate dehydrogenase/cyclohydrolase family. In terms of assembly, homodimer.

It catalyses the reaction (6R)-5,10-methylene-5,6,7,8-tetrahydrofolate + NADP(+) = (6R)-5,10-methenyltetrahydrofolate + NADPH. The catalysed reaction is (6R)-5,10-methenyltetrahydrofolate + H2O = (6R)-10-formyltetrahydrofolate + H(+). The protein operates within one-carbon metabolism; tetrahydrofolate interconversion. Catalyzes the oxidation of 5,10-methylenetetrahydrofolate to 5,10-methenyltetrahydrofolate and then the hydrolysis of 5,10-methenyltetrahydrofolate to 10-formyltetrahydrofolate. The polypeptide is Bifunctional protein FolD (Polaromonas naphthalenivorans (strain CJ2)).